A 368-amino-acid polypeptide reads, in one-letter code: Glutamate 5-kinase (368 aa).

Residue lysine 13 coordinates ATP. Substrate-binding residues include serine 54, aspartate 141, and asparagine 153. ATP is bound at residue 173–174; the sequence is SD. The region spanning 278–355 is the PUA domain; that stretch reads KGSLRLDAGA…DEIPEILGYP (78 aa).

The protein belongs to the glutamate 5-kinase family.

The protein resides in the cytoplasm. It catalyses the reaction L-glutamate + ATP = L-glutamyl 5-phosphate + ADP. Its pathway is amino-acid biosynthesis; L-proline biosynthesis; L-glutamate 5-semialdehyde from L-glutamate: step 1/2. Catalyzes the transfer of a phosphate group to glutamate to form L-glutamate 5-phosphate. The polypeptide is Glutamate 5-kinase (Jannaschia sp. (strain CCS1)).